Reading from the N-terminus, the 447-residue chain is Phosphoglucosamine mutase (447 aa).

Residue S108 is the Phosphoserine intermediate of the active site. Mg(2+)-binding residues include S108, D247, D249, and D251. Phosphoserine is present on S108.

It belongs to the phosphohexose mutase family. Mg(2+) serves as cofactor. Post-translationally, activated by phosphorylation.

The catalysed reaction is alpha-D-glucosamine 1-phosphate = D-glucosamine 6-phosphate. Its function is as follows. Catalyzes the conversion of glucosamine-6-phosphate to glucosamine-1-phosphate. The sequence is that of Phosphoglucosamine mutase from Bordetella avium (strain 197N).